Reading from the N-terminus, the 358-residue chain is Protein-glutamate methylesterase/protein-glutamine glutaminase 1 (358 aa).

Positions 8–125 constitute a Response regulatory domain; the sequence is RVLIVDDSAV…ARGLEGYAEE (118 aa). At Asp-59 the chain carries 4-aspartylphosphate. One can recognise a CheB-type methylesterase domain in the interval 157 to 352; it reads PVPGSALRFR…LERVAERLIA (196 aa). Active-site residues include Ser-177, His-203, and Asp-299.

This sequence belongs to the CheB family. In terms of processing, phosphorylated by CheA. Phosphorylation of the N-terminal regulatory domain activates the methylesterase activity.

The protein localises to the cytoplasm. The enzyme catalyses [protein]-L-glutamate 5-O-methyl ester + H2O = L-glutamyl-[protein] + methanol + H(+). The catalysed reaction is L-glutaminyl-[protein] + H2O = L-glutamyl-[protein] + NH4(+). In terms of biological role, involved in chemotaxis. Part of a chemotaxis signal transduction system that modulates chemotaxis in response to various stimuli. Catalyzes the demethylation of specific methylglutamate residues introduced into the chemoreceptors (methyl-accepting chemotaxis proteins or MCP) by CheR. Also mediates the irreversible deamidation of specific glutamine residues to glutamic acid. The polypeptide is Protein-glutamate methylesterase/protein-glutamine glutaminase 1 (Xanthomonas campestris pv. campestris (strain ATCC 33913 / DSM 3586 / NCPPB 528 / LMG 568 / P 25)).